The sequence spans 44 residues: Cytochrome b559 subunit beta (44 aa).

Residues W19–A35 form a helical membrane-spanning segment. Position 23 (H23) interacts with heme.

Belongs to the PsbE/PsbF family. Heterodimer of an alpha subunit and a beta subunit. PSII is composed of 1 copy each of membrane proteins PsbA, PsbB, PsbC, PsbD, PsbE, PsbF, PsbH, PsbI, PsbJ, PsbK, PsbL, PsbM, PsbT, PsbX, PsbY, PsbZ, Psb30/Ycf12, at least 3 peripheral proteins of the oxygen-evolving complex and a large number of cofactors. It forms dimeric complexes. The cofactor is heme b.

It localises to the plastid. The protein resides in the chloroplast thylakoid membrane. Functionally, this b-type cytochrome is tightly associated with the reaction center of photosystem II (PSII). PSII is a light-driven water:plastoquinone oxidoreductase that uses light energy to abstract electrons from H(2)O, generating O(2) and a proton gradient subsequently used for ATP formation. It consists of a core antenna complex that captures photons, and an electron transfer chain that converts photonic excitation into a charge separation. This Chlamydomonas reinhardtii (Chlamydomonas smithii) protein is Cytochrome b559 subunit beta.